A 681-amino-acid chain; its full sequence is DNA-directed RNA polymerase subunit beta' (681 aa).

4 residues coordinate Zn(2+): cysteine 69, cysteine 71, cysteine 87, and cysteine 90. Aspartate 489, aspartate 491, and aspartate 493 together coordinate Mg(2+).

Belongs to the RNA polymerase beta' chain family. RpoC1 subfamily. In terms of assembly, in plastids the minimal PEP RNA polymerase catalytic core is composed of four subunits: alpha, beta, beta', and beta''. When a (nuclear-encoded) sigma factor is associated with the core the holoenzyme is formed, which can initiate transcription. Mg(2+) serves as cofactor. The cofactor is Zn(2+).

It localises to the plastid. It is found in the chloroplast. It catalyses the reaction RNA(n) + a ribonucleoside 5'-triphosphate = RNA(n+1) + diphosphate. Its function is as follows. DNA-dependent RNA polymerase catalyzes the transcription of DNA into RNA using the four ribonucleoside triphosphates as substrates. The protein is DNA-directed RNA polymerase subunit beta' of Nicotiana tomentosiformis (Tobacco).